The primary structure comprises 97 residues: Class II hydrophobin 3 (97 aa).

A signal peptide spans 1-16; that stretch reads MKFFAAAALFIAGVLA. 4 cysteine pairs are disulfide-bonded: Cys-30-Cys-79, Cys-40-Cys-70, Cys-41-Cys-53, and Cys-80-Cys-91.

It belongs to the cerato-ulmin hydrophobin family. As to quaternary structure, homodimer. Homodimers further self-assemble to form highly ordered films at water-air interfaces through intermolecular interactions.

It is found in the secreted. The protein resides in the cell wall. In terms of biological role, aerial growth, conidiation, and dispersal of filamentous fungi in the environment rely upon a capability of their secreting small amphipathic proteins called hydrophobins (HPBs) with low sequence identity. Class I can self-assemble into an outermost layer of rodlet bundles on aerial cell surfaces, conferring cellular hydrophobicity that supports fungal growth, development and dispersal; whereas Class II form highly ordered films at water-air interfaces through intermolecular interactions but contribute nothing to the rodlet structure. The polypeptide is Class II hydrophobin 3 (Trichoderma asperellum (strain ATCC 204424 / CBS 433.97 / NBRC 101777)).